A 135-amino-acid chain; its full sequence is Putative pre-16S rRNA nuclease (135 aa).

The protein belongs to the YqgF nuclease family.

It localises to the cytoplasm. Its function is as follows. Could be a nuclease involved in processing of the 5'-end of pre-16S rRNA. In Christiangramia forsetii (strain DSM 17595 / CGMCC 1.15422 / KT0803) (Gramella forsetii), this protein is Putative pre-16S rRNA nuclease.